The following is a 292-amino-acid chain: ER membrane protein complex subunit 2 (292 aa).

One copy of the TPR repeat lies at 163 to 196 (AELWWYASEIYFEMGQFEKACYCLEQVLCITPFN).

This sequence belongs to the EMC2 family. As to quaternary structure, component of the ER membrane protein complex (EMC), which is composed of EMC1, EMC2, EMC3, EMC4, EMC5 and EMC6.

It is found in the endoplasmic reticulum membrane. Its function is as follows. Part of the endoplasmic reticulum membrane protein complex (EMC) that enables the energy-independent insertion into endoplasmic reticulum membranes of newly synthesized membrane proteins. Preferentially accommodates proteins with transmembrane domains that are weakly hydrophobic or contain destabilizing features such as charged and aromatic residues. Involved in the cotranslational insertion of multi-pass membrane proteins in which stop-transfer membrane-anchor sequences become ER membrane spanning helices. It is also required for the post-translational insertion of tail-anchored/TA proteins in endoplasmic reticulum membranes. By mediating the proper cotranslational insertion of N-terminal transmembrane domains in an N-exo topology, with translocated N-terminus in the lumen of the ER, controls the topology of multi-pass membrane proteins. This is ER membrane protein complex subunit 2 (EMC2) from Saccharomyces cerevisiae (strain ATCC 204508 / S288c) (Baker's yeast).